Reading from the N-terminus, the 831-residue chain is Protein ADP-ribosyltransferase PARP3 (831 aa).

The segment at 1–69 is disordered; that stretch reads MVHETRSRTL…KKLKAEESDL (69 aa). Basic and acidic residues-rich tracts occupy residues 15–32 and 43–66; these read EEGKAAPKKQKTESKEQE and KTADNEEHDGEQEPSKNKKLKAEE. Residues 49 to 199 form the PADR1 zinc-binding domain; that stretch reads EHDGEQEPSK…NKYPKRNLDD (151 aa). The interval 124–168 is zinc ribbon; sequence GPLDKCPVCGGQLECKGLKYNCTGTHSEWACCSFSTNNPSRRGGP. Residues Cys129, Cys132, Cys145, and Cys155 each coordinate Zn(2+). The region spanning 200–290 is the BRCT domain; it reads EGIFSGMMIA…EKQPLAAYDI (91 aa). The WGR domain maps to 338–439; it reads GGHIYEKDGI…KKFKKKCMKM (102 aa). One can recognise a PARP alpha-helical domain in the interval 466–585; sequence HCKLDPSVTF…DINVASRLIG (120 aa). Residues 594 to 827 form the PARP catalytic domain; sequence DPLSQCYKKL…VKYEEQNMEV (234 aa).

The protein belongs to the ARTD/PARP family.

It localises to the nucleus. The enzyme catalyses L-aspartyl-[protein] + NAD(+) = 4-O-(ADP-D-ribosyl)-L-aspartyl-[protein] + nicotinamide. It catalyses the reaction L-glutamyl-[protein] + NAD(+) = 5-O-(ADP-D-ribosyl)-L-glutamyl-[protein] + nicotinamide. Involved in the base excision repair (BER) pathway, by catalyzing the poly(ADP-ribosyl)ation of a limited number of acceptor proteins involved in chromatin architecture and in DNA metabolism. This modification follows DNA damages and appears as an obligatory step in a detection/signaling pathway leading to the reparation of DNA strand breaks. The chain is Protein ADP-ribosyltransferase PARP3 (PARP3) from Oryza sativa subsp. japonica (Rice).